The sequence spans 163 residues: Glycine cleavage system H protein, mitochondrial (163 aa).

A mitochondrion-targeting transit peptide spans 1-34; sequence MALRMWASSAANALGVSCAPKSHLLPALSLSRCF. One can recognise a Lipoyl-binding domain in the interval 56 to 137; sequence VATIGITDHA…YEEGWMVKVK (82 aa). At Lys-96 the chain carries N6-lipoyllysine.

Belongs to the GcvH family. The glycine cleavage system is composed of four proteins: P, T, L and H. (R)-lipoate is required as a cofactor.

It is found in the mitochondrion. The glycine cleavage system catalyzes the degradation of glycine. The H protein shuttles the methylamine group of glycine from the P protein to the T protein. The protein is Glycine cleavage system H protein, mitochondrial (GDCSH) of Mesembryanthemum crystallinum (Common ice plant).